We begin with the raw amino-acid sequence, 197 residues long: Protein GrpE (197 aa).

Residues 1–43 are disordered; it reads MSSKEQKTPDGQAPEEIVTEQHEEVESVESAESAEQVDPRDEE.

It belongs to the GrpE family. Homodimer.

It localises to the cytoplasm. Functionally, participates actively in the response to hyperosmotic and heat shock by preventing the aggregation of stress-denatured proteins, in association with DnaK and GrpE. It is the nucleotide exchange factor for DnaK and may function as a thermosensor. Unfolded proteins bind initially to DnaJ; upon interaction with the DnaJ-bound protein, DnaK hydrolyzes its bound ATP, resulting in the formation of a stable complex. GrpE releases ADP from DnaK; ATP binding to DnaK triggers the release of the substrate protein, thus completing the reaction cycle. Several rounds of ATP-dependent interactions between DnaJ, DnaK and GrpE are required for fully efficient folding. The polypeptide is Protein GrpE (Cronobacter sakazakii (strain ATCC BAA-894) (Enterobacter sakazakii)).